The following is a 446-amino-acid chain: Exodeoxyribonuclease 7 large subunit (446 aa).

It belongs to the XseA family. As to quaternary structure, heterooligomer composed of large and small subunits.

It is found in the cytoplasm. It carries out the reaction Exonucleolytic cleavage in either 5'- to 3'- or 3'- to 5'-direction to yield nucleoside 5'-phosphates.. Bidirectionally degrades single-stranded DNA into large acid-insoluble oligonucleotides, which are then degraded further into small acid-soluble oligonucleotides. This is Exodeoxyribonuclease 7 large subunit from Streptococcus gordonii (strain Challis / ATCC 35105 / BCRC 15272 / CH1 / DL1 / V288).